Reading from the N-terminus, the 468-residue chain is Transmembrane protein 151A (468 aa).

Positions 1–20 (MPEGEGGDCGEVPALVPDGE) are disordered. The next 2 helical transmembrane spans lie at 45 to 65 (CLLL…CRLA) and 98 to 118 (YLYI…AECW). The disordered stretch occupies residues 384–438 (VSSNSLPPARPSGPRLPFSRSRLSLGAGGRTTPGVFRSLSGGPLGRRGEDTEPLE).

The protein belongs to the TMEM151 family. Highly expressed in the central nervous system (CNS) including the cerebral cortex, hippocampus, spinal cord, brainstem, and thalamus. Expression is relatively low during postnatal stages but highly expressed at postnatal day 14 (P14), and declined in adulthood. Also expressed in the stomach, heart, liver, spleen, lung, kidney, and muscle.

It localises to the endoplasmic reticulum membrane. It is found in the cell projection. Its subcellular location is the axon. The protein localises to the dendrite. This is Transmembrane protein 151A (Tmem151a) from Mus musculus (Mouse).